The primary structure comprises 86 residues: Large ribosomal subunit protein bL27 (86 aa).

Residues 1 to 22 form a disordered region; it reads MAHKKAGGSSRNGRDSESKRLG.

The protein belongs to the bacterial ribosomal protein bL27 family.

The protein is Large ribosomal subunit protein bL27 of Acidithiobacillus ferrooxidans (strain ATCC 23270 / DSM 14882 / CIP 104768 / NCIMB 8455) (Ferrobacillus ferrooxidans (strain ATCC 23270)).